The following is a 299-amino-acid chain: MELLSALSLGELALSFSRVPLFPVFDLSYFIVSILYLKYEPGAVELSRRHPIASWLCAMLHCFGSYILADLLLGEPLIDYFSNNSSILLASAVWYLIFFCPLDLFYKCVCFLPVKLIFVAMKEVVRVRKIAVGIHHAHHHYHHGWFVMIATGWVKGSGVALMSNFEQLLRGVWKPETNEILHMSFPTKASLYGAILFTLQQTRWLPVSKASLIFIFTLFMVSCKVFLTATHSHSSPFDALEGYICPVLFGSACGGDHHHDNHGGSHSGGGPGAQHSAMPAKSKEELSEGSRKKKAKKAD.

The Lumenal segment spans residues 1-18 (MELLSALSLGELALSFSR). The chain crosses the membrane as a helical span at residues 19-39 (VPLFPVFDLSYFIVSILYLKY). Over 40–51 (EPGAVELSRRHP) the chain is Cytoplasmic. The helical transmembrane segment at 52-72 (IASWLCAMLHCFGSYILADLL) threads the bilayer. The Lumenal portion of the chain corresponds to 73–85 (LGEPLIDYFSNNS). Gly-74 lines the Ca(2+) pocket. The helical transmembrane segment at 86–106 (SILLASAVWYLIFFCPLDLFY) threads the bilayer. Topologically, residues 107 to 144 (KCVCFLPVKLIFVAMKEVVRVRKIAVGIHHAHHHYHHG) are cytoplasmic. Lys-122 and Arg-126 together coordinate a 1,2-diacyl-sn-glycero-3-phospho-(1D-myo-inositol-4,5-bisphosphate). A helical membrane pass occupies residues 145-165 (WFVMIATGWVKGSGVALMSNF). Over 166–178 (EQLLRGVWKPETN) the chain is Lumenal. Residues 179-199 (EILHMSFPTKASLYGAILFTL) traverse the membrane as a helical segment. The Cytoplasmic portion of the chain corresponds to 200–209 (QQTRWLPVSK). A helical membrane pass occupies residues 210 to 230 (ASLIFIFTLFMVSCKVFLTAT). Residues 231–234 (HSHS) are Lumenal-facing. Residues 235 to 255 (SPFDALEGYICPVLFGSACGG) form a helical membrane-spanning segment. Topologically, residues 256-299 (DHHHDNHGGSHSGGGPGAQHSAMPAKSKEELSEGSRKKKAKKAD) are cytoplasmic. Positions 260 to 299 (DNHGGSHSGGGPGAQHSAMPAKSKEELSEGSRKKKAKKAD) are disordered. Basic and acidic residues predominate over residues 281–290 (KSKEELSEGS).

It belongs to the TMEM38 family. Homotrimer; conformation seems to be controled by binding to diacylglycerol (DAG).

The protein localises to the sarcoplasmic reticulum membrane. It is found in the nucleus membrane. The catalysed reaction is K(+)(in) = K(+)(out). Its activity is regulated as follows. Channel activity is activated by a change of voltage within the sarcoplasmic reticulum lumen and blocked by luminal high Ca(2+) levels. Its function is as follows. Intracellular monovalent cation channel required for maintenance of rapid intracellular calcium release. Acts as a potassium counter-ion channel that functions in synchronization with calcium release from intracellular stores. Opened by a change of voltage within the sarcoplasmic reticulum lumen. This is Trimeric intracellular cation channel type A from Homo sapiens (Human).